The sequence spans 137 residues: DNA polymerase III subunit psi (137 aa).

This sequence belongs to the DNA polymerase III psi/HolD chain family. In terms of assembly, the DNA polymerase III holoenzyme complex contains at least 10 different subunits organized into 3 functionally essential subassemblies: the Pol III core, the beta sliding clamp processivity factor and the clamp-loading complex. The Pol III core (subunits alpha, epsilon and theta) contains the polymerase and the 3'-5' exonuclease proofreading activities. The polymerase is tethered to the template via the dimeric beta sliding clamp processivity factor. The clamp-loading complex (also called gamma complex) assembles the beta sliding clamp onto the primed template and plays a central role in the organization and communication at the replication fork. The clamp-loading complex contains delta, delta', psi and chi, and 3 copies of either or both of two different DnaX proteins, gamma and tau. The DNA replisome complex has a single clamp loader (3 tau and 1 each of delta, delta', psi and chi subunits) which binds 3 Pol III cores (1 core on the leading strand and 2 on the lagging strand) each with a beta sliding clamp dimer. Additional proteins in the replisome are other copies of gamma, psi (this protein) and chi (holC), SSB, DNA helicase and RNA primase. The clamp loader hydrolyzes ATP to assemble the beta processivity factor onto the primed template and plays a central role in the organization and communication at the replication fork. Interacts directly with the chi subunit (holC).

It catalyses the reaction DNA(n) + a 2'-deoxyribonucleoside 5'-triphosphate = DNA(n+1) + diphosphate. Its function is as follows. Part of the beta sliding clamp loading complex, which hydrolyzes ATP to load the beta clamp onto primed DNA to form the DNA replication pre-initiation complex. DNA polymerase III is a complex, multichain enzyme responsible for most of the replicative synthesis in bacteria. This DNA polymerase also exhibits 3' to 5' exonuclease activity. This chain is DNA polymerase III subunit psi, found in Escherichia coli (strain K12).